The chain runs to 412 residues: Exodeoxyribonuclease 7 large subunit (412 aa).

It belongs to the XseA family. As to quaternary structure, heterooligomer composed of large and small subunits.

The protein localises to the cytoplasm. It carries out the reaction Exonucleolytic cleavage in either 5'- to 3'- or 3'- to 5'-direction to yield nucleoside 5'-phosphates.. Its function is as follows. Bidirectionally degrades single-stranded DNA into large acid-insoluble oligonucleotides, which are then degraded further into small acid-soluble oligonucleotides. The protein is Exodeoxyribonuclease 7 large subunit of Nostoc sp. (strain PCC 7120 / SAG 25.82 / UTEX 2576).